The following is a 58-amino-acid chain: PGITXTSLHVAPGARLAVKGDIPAGAKSWVINLGKGENDIMLHFNARFDAHGDIRTIV.

The region spanning 2-58 is the Galectin domain; sequence GITXTSLHVAPGARLAVKGDIPAGAKSWVINLGKGENDIMLHFNARFDAHGDIRTIV. Residues 43–47 and H51 each bind a beta-D-galactoside; that span reads HFNAR.

In terms of assembly, monomer. Detected in most tissues, most abundantly in skin.

The protein resides in the secreted. It is found in the extracellular space. The protein localises to the extracellular matrix. Functionally, may regulate cell apoptosis and cell differentiation. Binds beta-galactoside and a wide array of complex carbohydrates. This is Galectin-1 from Podarcis hispanicus (Iberian wall lizard).